A 281-amino-acid chain; its full sequence is Phosphatidylglycerol--prolipoprotein diacylglyceryl transferase (281 aa).

Helical transmembrane passes span 11 to 31, 57 to 77, 89 to 109, 121 to 141, 194 to 214, 222 to 242, and 255 to 275; these read IIFT…VISF, LLYA…IIFY, VFYI…AIIV, ILEI…AGRI, PTQL…IYFF, GSIS…IEFF, and IITM…IIMY. Arg-140 serves as a coordination point for a 1,2-diacyl-sn-glycero-3-phospho-(1'-sn-glycerol).

It belongs to the Lgt family.

It is found in the cell inner membrane. The enzyme catalyses L-cysteinyl-[prolipoprotein] + a 1,2-diacyl-sn-glycero-3-phospho-(1'-sn-glycerol) = an S-1,2-diacyl-sn-glyceryl-L-cysteinyl-[prolipoprotein] + sn-glycerol 1-phosphate + H(+). It participates in protein modification; lipoprotein biosynthesis (diacylglyceryl transfer). Catalyzes the transfer of the diacylglyceryl group from phosphatidylglycerol to the sulfhydryl group of the N-terminal cysteine of a prolipoprotein, the first step in the formation of mature lipoproteins. This chain is Phosphatidylglycerol--prolipoprotein diacylglyceryl transferase, found in Buchnera aphidicola subsp. Acyrthosiphon pisum (strain Tuc7).